Reading from the N-terminus, the 307-residue chain is tRNA pseudouridine synthase B (307 aa).

The active-site Nucleophile is the Asp-47.

The protein belongs to the pseudouridine synthase TruB family. Type 1 subfamily.

The enzyme catalyses uridine(55) in tRNA = pseudouridine(55) in tRNA. In terms of biological role, responsible for synthesis of pseudouridine from uracil-55 in the psi GC loop of transfer RNAs. The sequence is that of tRNA pseudouridine synthase B from Chromohalobacter salexigens (strain ATCC BAA-138 / DSM 3043 / CIP 106854 / NCIMB 13768 / 1H11).